The chain runs to 424 residues: Adenylosuccinate synthetase (424 aa).

GTP is bound by residues 12–18 (GDEGKGK) and 40–42 (GHT). Asp13 functions as the Proton acceptor in the catalytic mechanism. Asp13 and Gly40 together coordinate Mg(2+). IMP-binding positions include 13–16 (DEGK), 38–41 (NAGH), Thr128, Arg142, Gln223, Thr238, and Arg302. His41 (proton donor) is an active-site residue. 298 to 304 (TTTGRPR) serves as a coordination point for substrate. Residues Arg304, 330–332 (HVD), and 412–414 (GVG) contribute to the GTP site.

Belongs to the adenylosuccinate synthetase family. In terms of assembly, homodimer. Mg(2+) is required as a cofactor.

The protein resides in the cytoplasm. It catalyses the reaction IMP + L-aspartate + GTP = N(6)-(1,2-dicarboxyethyl)-AMP + GDP + phosphate + 2 H(+). The protein operates within purine metabolism; AMP biosynthesis via de novo pathway; AMP from IMP: step 1/2. Plays an important role in the de novo pathway of purine nucleotide biosynthesis. Catalyzes the first committed step in the biosynthesis of AMP from IMP. This chain is Adenylosuccinate synthetase, found in Acetivibrio thermocellus (strain ATCC 27405 / DSM 1237 / JCM 9322 / NBRC 103400 / NCIMB 10682 / NRRL B-4536 / VPI 7372) (Clostridium thermocellum).